Here is a 289-residue protein sequence, read N- to C-terminus: UPF0725 protein At1g27860 (289 aa).

The segment at 266 to 289 (DQQRSMTLPSGEQAESSKKRPRLS) is disordered. Residues 268–279 (QRSMTLPSGEQA) show a composition bias toward polar residues.

The protein belongs to the UPF0725 (EMB2204) family.

The polypeptide is UPF0725 protein At1g27860 (Arabidopsis thaliana (Mouse-ear cress)).